The chain runs to 2153 residues: MEKYREIHQRVRDLAPGTVSALECIDLLDRLYAVRHDLVDQMIKHDWSDNKDVERPIGQVLLMAGIPNDIIQGMEKKIIPNSPSGQVLKSFFRMTPDNYKITGNLIEFIEVTVTADVSRGIREKKIKYEGGLQFVEHLLETESRKGNIPQPYKITFSVVAVKTDGSNISTQWPSRRNDGVVQHMRLVQADINYVREHLIKLDERASLEAMFNLKFHVSGPKLRYFNIPDYRPQQLCEPRIDNLIQYCKNWLTKEHKFVFKEVSGANVIQAFESHEQLHLQKYNESRKPRNFLLLQLTVQGAYLPSTISSDQCNTRIGCLEISKNQPETPVQMLALDISYKYLSLTRDELINYYSPRVHFQSSPNVKEPGTLKLGLSQLNPLSKSILDNVGKHKKDKGLFGEIIDSINVASQIQINACAKIIEQILSNLEINIGEINASMPSPNKTTGVDDLLNKFYDNELGKYMLSILRKTAAWHIGHLVRDITESLIAHAGLRRSKYWSVHAYDHGNVILFILPSKSLEVVGSYIRYFTVFKDGIGLIDADNIDSKAEIDGVTWCYSKVMSIDLNRLLALNIAFEKSLLATATWFQYYTEDQGHFPLQHALRSIFSFHFLLCVSQKMKLCAIFDNLRYLIPSVTSLYSGYELLIEKFFERPFKSSLDVYLYSIIKSLLISLAQNNKVRFYSRVRLLGLTVDHSTVGASGVYPSLMSRVVYKHYRSLISEATTCFFLFEKGLHGNLPEEAKIHLETIEWARKFQEKEKQYGDILLKEGYTIESVINGEVDVEQQLFCQEVSELSAQELNKYLQAKSQVLCANIMNKHWDKPYFSQTRNISLKGMSGALQEDGHLAASVTLIEAIRFLNRSQTNPNVIDMYEQTKQSKAQARIVRKYQRTEADRGFFITTLPTRVRLEIIEDYFDAIAKVVPEEYISYGGDKKVLNIQNALEKALRWASGVSEITTSTGKSIKFKRKLMYVSADATKWSPGDNSAKFRRFTQAIYDGLSDNKLKCCVVDALRNIYETEFFMSRKLHRYIDSMENHSDAVEDFLAFFSNGVSANVKGNWLQGNLNKCSSLFGAAVSLLFREVWKQLFPELECFFEFAHHSDDALFIYGYLEPEDDGTDWFLYVSQQIQAGNFHWHAINQEMWKSMFNLHEHLLLMGSIKVSPKKTTVSPTNAEFLSTFFEGCAVSIPFVKILLGSLSDLPGLGFFDDLAAAQSRCVKSLDLGACPQLAQLAIVLCTSKVERLYGTADGMVNSPTAFLKVNKAHVPVPLGGDGSMSIMELATAGFGMADKNILKNAFISYKHTRRDGDRYVLGLFKFLMSLSEDVFQHDRLGEFSFVGKVQWKVFTPKAEFEFHDQFSHNYLLEWTRQHPVYDYIIPRNRDNLLVYLVRKLNDPSIITAMTMQSPLQLRFRMQAKQHMKVCRYEGEWVTFREVLAAADSFATSYQPTERDMDLFNTLVSCTFSKEYAWKDFLNEVRCEVLTTRHVHRPKIARTFTVREKDQAIQNPINSVIGYKYALTVDEVSDVLDSAFFPESLSADLQVMKDGVYRELGLDISSPEVLKRIAPLLYKAGRSRVVIVEGNVEGTAESICSYWLKTMSLIKTIRVRPKKEVLKAMSLYSVKENIGLQDDIAATRLCIEIWRWCKANEQDVKEWLTSLYFEKQTLMDWVERFRRKGVVPIDPEIQCIGLLLYDVLGYKSVLQMQANRRAYSGKQYDAYCVQTYNEETKLYEGDLRVTFNFGLDCARLEVFWDKKEYILETSITQRHVLRLLMEEVSQELIRCGMRFKTEQVNQTRSLVLFKTEAGFEWGKPNVPCIVYKHCVLRTGLRTKQPINKEFMINVQSDGFRAIAQMDIESPRFLLAHAYHTLRDIRYQAVQAVGNVWFKTEQHKLFINPIISSGLLENFMKGLPAAIPPAAYSLIMNKAKISVDLFMFNELLALINRNNILNLDGIEETSEGYSTVTSMSSKQWSEEMSLMSDDDIDDMEDFTIALDDIDFEQINLEEDIQHFLQDESAYVGDLLIQTEDIEVKKIRGVTRVLEPVKLLKSWVSKGLAIDKVYNPIGIILMARYMSKTYNFSSTPLALLNPYDLTELESVVKGWGETVNDRFKDLDIEAQTVVKEKGVQPEDVLPDSLFSFRHVDVLLRRLFPRDPVSTFY.

Positions 36, 54, 97, 110, and 111 each coordinate Mn(2+). The active-site For endonuclease activity is Lys-124. The region spanning 957–1143 is the RdRp catalytic domain; the sequence is TGKSIKFKRK…AINQEMWKSM (187 aa). Position 1100 (Asp-1100) interacts with Mg(2+).

Belongs to the Bunyavirales RNA polymerase family. As to quaternary structure, interacts with the viral nucleoprotein. Mn(2+) serves as cofactor. It depends on Mg(2+) as a cofactor.

It localises to the host cytoplasm. The protein resides in the host perinuclear region. The catalysed reaction is RNA(n) + a ribonucleoside 5'-triphosphate = RNA(n+1) + diphosphate. Functionally, RNA-dependent RNA polymerase, which is responsible for the replication and transcription of the viral RNA genome using antigenomic RNA as an intermediate. During transcription, synthesizes subgenomic RNAs and assures their capping by a cap-snatching mechanism, which involves the endonuclease activity cleaving the host capped pre-mRNAs. These short capped RNAs are then used as primers for viral transcription. Cleaves ssRNA substrates but not DNA. Seems to downregulate the expression of its own and heterologous mRNAs through its endonuclease activity. This Abrothrix longipilis (Long-haired grass mouse) protein is RNA-directed RNA polymerase L.